Reading from the N-terminus, the 254-residue chain is Syntaxin-6 (254 aa).

The Cytoplasmic portion of the chain corresponds to 1-233 (MSMEDPFFVV…VSHMTSDRRQ (233 aa)). A coiled-coil region spans residues 46–72 (TTNELRNNLRSIEWDLEDLDETISIVE). The interval 103 to 138 (KDQMSNSSMQALAERKNRQALLGESSSQSWSSGPDK) is disordered. Positions 162–224 (QLIVEQQDEQ…DNVMKKLAKV (63 aa)) constitute a t-SNARE coiled-coil homology domain. A helical; Anchor for type IV membrane protein membrane pass occupies residues 234-254 (WCAIIVLFVILLVVLVLFLVL).

It belongs to the syntaxin family.

The protein localises to the golgi apparatus membrane. Its subcellular location is the golgi apparatus. The protein resides in the trans-Golgi network membrane. It localises to the recycling endosome membrane. Functionally, SNARE promoting movement of transport vesicles to target membranes. Targets endosomes to the trans-Golgi network, and may therefore function in retrograde trafficking. Together with SNARE STX12, promotes movement of vesicles from endosomes to the cell membrane, and may therefore function in the endocytic recycling pathway. In Gallus gallus (Chicken), this protein is Syntaxin-6 (STX6).